A 191-amino-acid chain; its full sequence is Orotate phosphoribosyltransferase (191 aa).

114–122 contacts 5-phospho-alpha-D-ribose 1-diphosphate; sequence EDVVTTGKS. Residues threonine 118 and arginine 146 each coordinate orotate.

The protein belongs to the purine/pyrimidine phosphoribosyltransferase family. PyrE subfamily. Homodimer. Requires Mg(2+) as cofactor.

The enzyme catalyses orotidine 5'-phosphate + diphosphate = orotate + 5-phospho-alpha-D-ribose 1-diphosphate. The protein operates within pyrimidine metabolism; UMP biosynthesis via de novo pathway; UMP from orotate: step 1/2. Its function is as follows. Catalyzes the transfer of a ribosyl phosphate group from 5-phosphoribose 1-diphosphate to orotate, leading to the formation of orotidine monophosphate (OMP). In Clostridium botulinum (strain ATCC 19397 / Type A), this protein is Orotate phosphoribosyltransferase.